The primary structure comprises 150 residues: Cytochrome c oxidase subunit 5A, mitochondrial (150 aa).

The N-terminal 41 residues, 1–41 (MLGAALRRCAVAATARAGPRGLLHSAPTPGPAAAIQSVRCY), are a transit peptide targeting the mitochondrion. An SIFI-degron motif is present at residues 2–17 (LGAALRRCAVAATARA). An N6-acetyllysine mark is found at lysine 87 and lysine 113. Threonine 141 is modified (phosphothreonine).

This sequence belongs to the cytochrome c oxidase subunit 5A family. Component of the cytochrome c oxidase (complex IV, CIV), a multisubunit enzyme composed of 14 subunits. The complex is composed of a catalytic core of 3 subunits MT-CO1, MT-CO2 and MT-CO3, encoded in the mitochondrial DNA, and 11 supernumerary subunits COX4I, COX5A, COX5B, COX6A, COX6B, COX6C, COX7A, COX7B, COX7C, COX8 and NDUFA4, which are encoded in the nuclear genome. The complex exists as a monomer or a dimer and forms supercomplexes (SCs) in the inner mitochondrial membrane with NADH-ubiquinone oxidoreductase (complex I, CI) and ubiquinol-cytochrome c oxidoreductase (cytochrome b-c1 complex, complex III, CIII), resulting in different assemblies (supercomplex SCI(1)III(2)IV(1) and megacomplex MCI(2)III(2)IV(2)). Interacts with AFG1L. Interacts with RAB5IF. In terms of processing, in response to mitochondrial stress, the precursor protein is ubiquitinated by the SIFI complex in the cytoplasm before mitochondrial import, leading to its degradation. Within the SIFI complex, UBR4 initiates ubiquitin chain that are further elongated or branched by KCMF1.

Its subcellular location is the mitochondrion inner membrane. Its pathway is energy metabolism; oxidative phosphorylation. Functionally, component of the cytochrome c oxidase, the last enzyme in the mitochondrial electron transport chain which drives oxidative phosphorylation. The respiratory chain contains 3 multisubunit complexes succinate dehydrogenase (complex II, CII), ubiquinol-cytochrome c oxidoreductase (cytochrome b-c1 complex, complex III, CIII) and cytochrome c oxidase (complex IV, CIV), that cooperate to transfer electrons derived from NADH and succinate to molecular oxygen, creating an electrochemical gradient over the inner membrane that drives transmembrane transport and the ATP synthase. Cytochrome c oxidase is the component of the respiratory chain that catalyzes the reduction of oxygen to water. Electrons originating from reduced cytochrome c in the intermembrane space (IMS) are transferred via the dinuclear copper A center (CU(A)) of subunit 2 and heme A of subunit 1 to the active site in subunit 1, a binuclear center (BNC) formed by heme A3 and copper B (CU(B)). The BNC reduces molecular oxygen to 2 water molecules using 4 electrons from cytochrome c in the IMS and 4 protons from the mitochondrial matrix. This is Cytochrome c oxidase subunit 5A, mitochondrial (COX5A) from Cebuella pygmaea (Pygmy marmoset).